The following is a 436-amino-acid chain: GTPase Der (436 aa).

EngA-type G domains are found at residues 4–167 (PIVA…KEEE) and 176–351 (IRLS…ENHK). GTP is bound by residues 10–17 (GRPNVGKS), 57–61 (DTGGI), 119–122 (NKVD), 182–189 (GRPNVGKS), 229–233 (DTAGM), and 294–297 (NKWD). In terms of domain architecture, KH-like spans 352 to 436 (KRVQSSTLNE…PVHIIARKRN (85 aa)).

It belongs to the TRAFAC class TrmE-Era-EngA-EngB-Septin-like GTPase superfamily. EngA (Der) GTPase family. In terms of assembly, associates with the 50S ribosomal subunit.

Functionally, GTPase that plays an essential role in the late steps of ribosome biogenesis. The sequence is that of GTPase Der from Staphylococcus saprophyticus subsp. saprophyticus (strain ATCC 15305 / DSM 20229 / NCIMB 8711 / NCTC 7292 / S-41).